Reading from the N-terminus, the 288-residue chain is 4-diphosphocytidyl-2-C-methyl-D-erythritol kinase (288 aa).

The active site involves lysine 22. 104–114 (PSQAGLGGGSS) lines the ATP pocket. Residue aspartate 146 is part of the active site.

This sequence belongs to the GHMP kinase family. IspE subfamily.

The enzyme catalyses 4-CDP-2-C-methyl-D-erythritol + ATP = 4-CDP-2-C-methyl-D-erythritol 2-phosphate + ADP + H(+). It participates in isoprenoid biosynthesis; isopentenyl diphosphate biosynthesis via DXP pathway; isopentenyl diphosphate from 1-deoxy-D-xylulose 5-phosphate: step 3/6. Its function is as follows. Catalyzes the phosphorylation of the position 2 hydroxy group of 4-diphosphocytidyl-2C-methyl-D-erythritol. The protein is 4-diphosphocytidyl-2-C-methyl-D-erythritol kinase of Protochlamydia amoebophila (strain UWE25).